A 344-amino-acid chain; its full sequence is tRNA N6-adenosine threonylcarbamoyltransferase (344 aa).

Fe cation contacts are provided by histidine 110 and histidine 114. Substrate is bound by residues alanine 133–alanine 137, aspartate 166, glycine 179, and asparagine 278. Position 303 (aspartate 303) interacts with Fe cation.

The protein belongs to the KAE1 / TsaD family. Fe(2+) serves as cofactor.

Its subcellular location is the cytoplasm. The catalysed reaction is L-threonylcarbamoyladenylate + adenosine(37) in tRNA = N(6)-L-threonylcarbamoyladenosine(37) in tRNA + AMP + H(+). Functionally, required for the formation of a threonylcarbamoyl group on adenosine at position 37 (t(6)A37) in tRNAs that read codons beginning with adenine. Is involved in the transfer of the threonylcarbamoyl moiety of threonylcarbamoyl-AMP (TC-AMP) to the N6 group of A37, together with TsaE and TsaB. TsaD likely plays a direct catalytic role in this reaction. This Chlamydia caviae (strain ATCC VR-813 / DSM 19441 / 03DC25 / GPIC) (Chlamydophila caviae) protein is tRNA N6-adenosine threonylcarbamoyltransferase.